The chain runs to 242 residues: Myogenic factor 6 (242 aa).

The disordered stretch occupies residues 31–63 (SPLYPGSDGTLSPCQDQMPPEAGSDSSGEEHVL). In terms of domain architecture, bHLH spans 93–144 (DRRKAATLRERRRLKKINEAFEALKRRTVANPNQRLPKVEILRSAINYIERL).

As to quaternary structure, efficient DNA binding requires dimerization with another bHLH protein. Interacts with CSRP3.

It localises to the nucleus. Functionally, involved in muscle differentiation (myogenic factor). Induces fibroblasts to differentiate into myoblasts. Probable sequence specific DNA-binding protein. The polypeptide is Myogenic factor 6 (MYF6) (Bos taurus (Bovine)).